Consider the following 92-residue polypeptide: Protein LSO2 (92 aa).

Composition is skewed to basic and acidic residues over residues 1–10 (MGKRFSESAA) and 38–72 (EASK…ERDA). The disordered stretch occupies residues 1–92 (MGKRFSESAA…KGGKGKRKMK (92 aa)). The stretch at 17–80 (ARKRDQAHAK…DALLTAEEEQ (64 aa)) forms a coiled coil.

Belongs to the CCDC124 family. In terms of assembly, associates with translationally inactive ribosomes in the nonrotated state. LSO2 bridges the decoding sites of the small with the GTPase activating center (GAC) of the large subunit. This position allows accommodation of the DOM34-dependent ribosome recycling system, which splits LSO2-containing ribosomes.

It is found in the nucleus. The protein resides in the cytoplasm. Ribosome-binding protein involved in ribosome hibernation by associating with translationally inactive ribosomes. Required for translational recovery after starvation from stationary phase. May facilitate rapid translation reactivation by stabilizing the recycling-competent state of inactive ribosomes. This is Protein LSO2 from Saccharomyces cerevisiae (strain ATCC 204508 / S288c) (Baker's yeast).